The primary structure comprises 121 residues: Large ribosomal subunit protein uL14 (121 aa).

Belongs to the universal ribosomal protein uL14 family. Part of the 50S ribosomal subunit. Forms a cluster with proteins L3 and L19. In the 70S ribosome, L14 and L19 interact and together make contacts with the 16S rRNA in bridges B5 and B8.

Binds to 23S rRNA. Forms part of two intersubunit bridges in the 70S ribosome. This chain is Large ribosomal subunit protein uL14, found in Prochlorococcus marinus (strain NATL1A).